The chain runs to 321 residues: Cytochrome f (321 aa).

The N-terminal stretch at 1-38 is a signal peptide; the sequence is MINLFLLKYKTAFSTFLKPFAYLSLILSVCFYSIQAQA. The heme site is built by Phe-39, Cys-59, Cys-62, and His-63. Residues 287–306 traverse the membrane as a helical segment; the sequence is VKGLIAFFFTVILAQILLVL.

It belongs to the cytochrome f family. The 4 large subunits of the cytochrome b6-f complex are cytochrome b6, subunit IV (17 kDa polypeptide, petD), cytochrome f and the Rieske protein, while the 4 small subunits are PetG, PetL, PetM and PetN. The complex functions as a dimer. It depends on heme as a cofactor.

Its subcellular location is the plastid. The protein resides in the chloroplast thylakoid membrane. Functionally, component of the cytochrome b6-f complex, which mediates electron transfer between photosystem II (PSII) and photosystem I (PSI), cyclic electron flow around PSI, and state transitions. The chain is Cytochrome f (petA) from Guillardia theta (Cryptophyte).